The sequence spans 224 residues: N-terminal Xaa-Pro-Lys N-methyltransferase 1 (224 aa).

S-adenosyl-L-methionine is bound by residues Gly-70, Arg-75, Asp-92–Thr-94, Leu-120–Gln-121, and Gln-136.

The protein belongs to the methyltransferase superfamily. NTM1 family.

The protein localises to the nucleus. It catalyses the reaction N-terminal L-alanyl-L-prolyl-L-lysyl-[protein] + 3 S-adenosyl-L-methionine = N-terminal N,N,N-trimethyl-L-alanyl-L-prolyl-L-lysyl-[protein] + 3 S-adenosyl-L-homocysteine + 3 H(+). The catalysed reaction is N-terminal L-seryl-L-prolyl-L-lysyl-[protein] + 3 S-adenosyl-L-methionine = N-terminal N,N,N-trimethyl-L-seryl-L-prolyl-L-lysyl-[protein] + 3 S-adenosyl-L-homocysteine + 3 H(+). It carries out the reaction N-terminal L-prolyl-L-prolyl-L-lysyl-[protein] + 2 S-adenosyl-L-methionine = N-terminal N,N-dimethyl-L-prolyl-L-prolyl-L-lysyl-[protein] + 2 S-adenosyl-L-homocysteine + 2 H(+). Its function is as follows. Distributive alpha-N-methyltransferase that methylates the N-terminus of target proteins containing the N-terminal motif [Ala/Gly/Pro/Ser]-Pro-Lys when the initiator Met is cleaved. Specifically catalyzes mono-, di- or tri-methylation of the exposed alpha-amino group of the Ala, Gly or Ser residue in the [Ala/Gly/Ser]-Pro-Lys motif and mono- or di-methylation of Pro in the Pro-Pro-Lys motif. Required during mitosis for normal bipolar spindle formation and chromosome segregation via its action on target proteins. The sequence is that of N-terminal Xaa-Pro-Lys N-methyltransferase 1 (ntmt1) from Xenopus tropicalis (Western clawed frog).